The chain runs to 357 residues: Anthranilate phosphoribosyltransferase (357 aa).

Residues Gly91, 94–95 (GD), Thr99, 101–104 (NIST), 119–127 (KHGNRSVSS), and Ser131 contribute to the 5-phospho-alpha-D-ribose 1-diphosphate site. Gly91 provides a ligand contact to anthranilate. Mg(2+) is bound at residue Ser103. Anthranilate is bound at residue Asn122. Anthranilate is bound at residue Arg177. Residues Asp235 and Glu236 each contribute to the Mg(2+) site.

This sequence belongs to the anthranilate phosphoribosyltransferase family. As to quaternary structure, homodimer. The cofactor is Mg(2+).

It catalyses the reaction N-(5-phospho-beta-D-ribosyl)anthranilate + diphosphate = 5-phospho-alpha-D-ribose 1-diphosphate + anthranilate. It participates in amino-acid biosynthesis; L-tryptophan biosynthesis; L-tryptophan from chorismate: step 2/5. In terms of biological role, catalyzes the transfer of the phosphoribosyl group of 5-phosphorylribose-1-pyrophosphate (PRPP) to anthranilate to yield N-(5'-phosphoribosyl)-anthranilate (PRA). The sequence is that of Anthranilate phosphoribosyltransferase from Shewanella baltica (strain OS195).